The chain runs to 285 residues: Anamorsin homolog 1 (285 aa).

The segment at 1–150 (MEATVLLVTD…QKPTWETGSS (150 aa)) is N-terminal SAM-like domain. The interval 150-195 (SFSLKKKSVQKQESLPKPGALSVKPEMNVDLEDLIDEESLLSEEDL) is linker. Positions 206, 215, 218, and 220 each coordinate [2Fe-2S] cluster. The tract at residues 206 to 220 (CEVSTKRKACKNCTC) is fe-S binding site A. [4Fe-4S] cluster is bound by residues Cys246, Cys249, Cys257, and Cys260. Short sequence motifs (cx2C motif) lie at residues 246 to 249 (CGNC) and 257 to 260 (CSSC). Residues 246-260 (CGNCGLGDAFRCSSC) form a fe-S binding site B region.

The protein belongs to the anamorsin family. In terms of assembly, monomer. It depends on [2Fe-2S] cluster as a cofactor. [4Fe-4S] cluster serves as cofactor.

Its subcellular location is the cytoplasm. The protein localises to the mitochondrion intermembrane space. Its function is as follows. Component of the cytosolic iron-sulfur (Fe-S) protein assembly (CIA) machinery. Required for the maturation of extramitochondrial Fe-S proteins. Part of an electron transfer chain functioning in an early step of cytosolic Fe-S biogenesis, facilitating the de novo assembly of a [4Fe-4S] cluster on the cytosolic Fe-S scaffold complex. Electrons are transferred from NADPH via a FAD- and FMN-containing diflavin oxidoreductase. Together with the diflavin oxidoreductase, also required for the assembly of the diferric tyrosyl radical cofactor of ribonucleotide reductase (RNR), probably by providing electrons for reduction during radical cofactor maturation in the catalytic small subunit. The chain is Anamorsin homolog 1 from Picea sitchensis (Sitka spruce).